The primary structure comprises 131 residues: Ribonuclease VapC42 (131 aa).

The PINc domain maps to 1–125 (MIVDTSAIVA…FRGDDFTHTD (125 aa)). Residues aspartate 4 and aspartate 100 each contribute to the Mg(2+) site.

The protein belongs to the PINc/VapC protein family. Mg(2+) serves as cofactor.

Its function is as follows. Toxic component of a type II toxin-antitoxin (TA) system. An RNase. Its cognate antitoxin is VapB42. This is Ribonuclease VapC42 from Mycobacterium tuberculosis (strain CDC 1551 / Oshkosh).